Here is a 332-residue protein sequence, read N- to C-terminus: Probable xyloglucan endotransglucosylase/hydrolase protein 28 (332 aa).

The signal sequence occupies residues 1–22; sequence MGFITRFLVFMSLFTSLVSGFA. Positions 23–223 constitute a GH16 domain; the sequence is LQKLPLIQFD…YKYAPYVSQF (201 aa). The active-site Nucleophile is the E108. E112 acts as the Proton donor in catalysis. Residues E112 and 125-127 contribute to the xyloglucan site; that span reads QTN. Residue N131 is glycosylated (N-linked (GlcNAc...) asparagine). Residues 135–139, 202–203, G207, and R282 contribute to the xyloglucan site; these read HLGRE and KW. The cysteines at positions 277 and 290 are disulfide-linked. Basic residues predominate over residues 313 to 326; sequence HGHRRGKHRSRSRL. The tract at residues 313–332 is disordered; it reads HGHRRGKHRSRSRLARTESI.

It belongs to the glycosyl hydrolase 16 family. XTH group 3 subfamily. Post-translationally, contains at least one intrachain disulfide bond essential for its enzymatic activity. As to expression, expressed in 7 day old seedlings, roots, rosette leaves, internodes between nodes bearing axillary shoots, nodes bearing flowers, flower buds and siliques.

It is found in the secreted. The protein resides in the cell wall. It localises to the extracellular space. The protein localises to the apoplast. It catalyses the reaction breaks a beta-(1-&gt;4) bond in the backbone of a xyloglucan and transfers the xyloglucanyl segment on to O-4 of the non-reducing terminal glucose residue of an acceptor, which can be a xyloglucan or an oligosaccharide of xyloglucan.. Functionally, catalyzes xyloglucan endohydrolysis (XEH) and/or endotransglycosylation (XET). Cleaves and religates xyloglucan polymers, an essential constituent of the primary cell wall, and thereby participates in cell wall construction of growing tissues. The polypeptide is Probable xyloglucan endotransglucosylase/hydrolase protein 28 (XTH28) (Arabidopsis thaliana (Mouse-ear cress)).